Consider the following 202-residue polypeptide: Peptidyl-tRNA hydrolase (202 aa).

Tyrosine 19 contacts tRNA. Residue histidine 24 is the Proton acceptor of the active site. TRNA is bound by residues tyrosine 70, asparagine 72, and asparagine 118.

The protein belongs to the PTH family. As to quaternary structure, monomer.

Its subcellular location is the cytoplasm. The enzyme catalyses an N-acyl-L-alpha-aminoacyl-tRNA + H2O = an N-acyl-L-amino acid + a tRNA + H(+). Hydrolyzes ribosome-free peptidyl-tRNAs (with 1 or more amino acids incorporated), which drop off the ribosome during protein synthesis, or as a result of ribosome stalling. Its function is as follows. Catalyzes the release of premature peptidyl moieties from peptidyl-tRNA molecules trapped in stalled 50S ribosomal subunits, and thus maintains levels of free tRNAs and 50S ribosomes. The sequence is that of Peptidyl-tRNA hydrolase from Prochlorococcus marinus (strain NATL1A).